A 313-amino-acid chain; its full sequence is uncharacterized protein (313 aa).

The next 3 helical transmembrane spans lie at 19–41 (GLAVAIALITAIAWFPDGLAGFL), 51–68 (AIIGAILTILGLSIIFFL), and 81–103 (IAEFGFIVLTLIFSLIVFNDFAI).

The protein resides in the cell membrane. This is an uncharacterized protein from Aquifex aeolicus (strain VF5).